Consider the following 186-residue polypeptide: Adenylate kinase isoenzyme 6 homolog (186 aa).

ATP is bound by residues glycine 15, glycine 17, lysine 18, serine 19, and threonine 20. The interval 48 to 71 (NLSNIIKDERLYKEFDDELDASIY) is NMPbind. The segment at 126–136 (KRNYTKEKIKN) is LID. ATP is bound at residue arginine 127.

It belongs to the adenylate kinase family. AK6 subfamily. In terms of assembly, monomer and homodimer. Interacts with small ribosomal subunit protein uS11. Not a structural component of 43S pre-ribosomes, but transiently interacts with them by binding to uS11.

The protein localises to the cytoplasm. It is found in the nucleus. It catalyses the reaction AMP + ATP = 2 ADP. The enzyme catalyses ATP + H2O = ADP + phosphate + H(+). Its function is as follows. Broad-specificity nucleoside monophosphate (NMP) kinase that catalyzes the reversible transfer of the terminal phosphate group between nucleoside triphosphates and monophosphates. Also has ATPase activity. Involved in the late cytoplasmic maturation steps of the 40S ribosomal particles, specifically 18S rRNA maturation. While NMP activity is not required for ribosome maturation, ATPase activity is. Associates transiently with small ribosomal subunit protein uS11. ATP hydrolysis breaks the interaction with uS11. May temporarily remove uS11 from the ribosome to enable a conformational change of the ribosomal RNA that is needed for the final maturation step of the small ribosomal subunit. Its NMP activity may have a role in nuclear energy homeostasis. The polypeptide is Adenylate kinase isoenzyme 6 homolog (Plasmodium falciparum (isolate 3D7)).